The sequence spans 513 residues: PPE family protein PPE4 (513 aa).

The next 3 helical transmembrane spans lie at 233-253, 277-297, and 309-329; these read IIIA…PLLF, FLLP…PIVL, and LAAA…AVTG. Disordered regions lie at residues 395 to 446 and 469 to 513; these read AAAA…ERGA and LAGD…HDSK.

Belongs to the mycobacterial PPE family.

The protein resides in the cell membrane. In terms of biological role, important for the siderophore-mediated iron-acquisition function of ESX-3. The polypeptide is PPE family protein PPE4 (PPE4) (Mycobacterium tuberculosis (strain CDC 1551 / Oshkosh)).